The following is a 445-amino-acid chain: Glutamyl-tRNA(Gln) amidotransferase subunit D (445 aa).

Residues 93–425 form the Asparaginase/glutaminase domain; it reads SEIKIISTGG…EKIRSLMISN (333 aa). Catalysis depends on residues Thr-103, Thr-179, Asp-180, and Lys-258.

The protein belongs to the asparaginase 1 family. GatD subfamily. Heterodimer of GatD and GatE.

It carries out the reaction L-glutamyl-tRNA(Gln) + L-glutamine + ATP + H2O = L-glutaminyl-tRNA(Gln) + L-glutamate + ADP + phosphate + H(+). In terms of biological role, allows the formation of correctly charged Gln-tRNA(Gln) through the transamidation of misacylated Glu-tRNA(Gln) in organisms which lack glutaminyl-tRNA synthetase. The reaction takes place in the presence of glutamine and ATP through an activated gamma-phospho-Glu-tRNA(Gln). The GatDE system is specific for glutamate and does not act on aspartate. This chain is Glutamyl-tRNA(Gln) amidotransferase subunit D, found in Saccharolobus islandicus (strain Y.N.15.51 / Yellowstone #2) (Sulfolobus islandicus).